The chain runs to 440 residues: MKKFSIVVAGGGSTFTPGIVLMLLENLDKFPIRQIKFYDNDAQRQEVIAKACDIIIKEKAPDINFVYTTDPETAFTDIDFVMAHIRVGKYAMREKDEKIPLRHGVLGQETCGPGGISYGMRSIGGVIELVDYMEKYSPNAWMLNYSNPAAIVAEATRRLRPNSKILNICDMPIGIEIRMAEMLGLKSRKDMVIRYFGLNHFGWWTDIRDKKGNDLMPALREKVAKIGYNVEIEGENTEASWNDTFTKARDVFAIDPTTMPNTYLKYYFFPDYVVEHSNPNHTRANEVMEGREKFVFGECRAIAEKGTAKDSKLHVDDHASYIVDLARAIAYDTKERMLLIVENDGAISNFDPTAMVEVPCIVGSNGPEKIVQGKIPQFQKGLMEQQVSVEKLTVEAWMEGSYQKLWQAITLSRTVPSASVAKAILDDLIEANKDFWPVLK.

Residue Phe-4–Asp-70 participates in NAD(+) binding. Substrate contacts are provided by Arg-93 and Asn-147. A Mn(2+)-binding site is contributed by Cys-169. Asp-170 (proton donor) is an active-site residue. His-200 contributes to the Mn(2+) binding site. The active-site Proton acceptor is the Tyr-263. Arg-283 contributes to the substrate binding site.

It belongs to the glycosyl hydrolase 4 family. As to quaternary structure, homodimer. The cofactor is NAD(+). Mn(2+) serves as cofactor.

The protein operates within glycan degradation; palatinose degradation. In terms of biological role, in vitro, readily hydrolyzes p-nitrophenyl-alpha-D-glucopyranoside 6-phosphate (pNPalphaG6P), a chromogenic analog of the phosphorylated isomers of sucrose. In vivo, is probably involved in the degradation of the 6-phosphate derivatives of the sucrose isomers trehalulose, turanose, maltulose and palatinose, catalyzing their hydrolysis into glucose 6-phosphate (G6P) and fructose, which allows the bacterium to use these sugars as energy sources for growth. Is not able to hydrolyze the C2 or C4 chromogenic stereomers (i.e. pNPalpha-mannopyranoside-6P and pNPalpha-galactopyranoside-6P, respectively). This is 6-phospho-alpha-glucosidase (pagL) from Leptotrichia buccalis (strain ATCC 14201 / DSM 1135 / JCM 12969 / NCTC 10249 / C-1013-b).